A 1145-amino-acid polypeptide reads, in one-letter code: MVSRPAMSPVSPVWPRKPNLWAFWVLRLVLLLSLKSWAEDALQHCTWLLVLNKFEKVGLHLSKDRFQDHEPIDTVAKVFQKLTDSPIDPSENYLSFPYYLQINFSCPGQNIEELARKGHLMGMKPMVQINYMYSVNFYRWEMENVQILMEAAPMRSTGYCPAEAMCVLNWYTPMPFKNGSVVSSVDIYTNGIGPFVSKKRFYVNMNGFLKRDASGKSLFAIGYESLVLKSSHFRLSKSRPLWYTVNHAPVFILGGFYDEKSILFSDSNFQDYVLLELSIDSCWVGSFYCPILGFSATIHDAIATESTLFIRQNQLVYYFTGTYITLFDKSHGSSRWVRVLPSECIKRLCPVYASGNGSEYVLALTTGKNEGYIHIGTITDGLVSFEMVPDGWSVCEKLPGKNCSIDWATYIADERNLLLLVKIDSGQFYLVNFNTEFKTLNILYKIPEFIPEAKELDFLVLLDTVTYTNTPMTPKGLFFNTLNNMLYIWGNFILQSYNREEFIFLADFPKESTIKYMVNSFKGQMAVVTENEEIWYFLEGGYDVYQVVPSQGWETYHNLQKMQKSSFHSEDESLVSLFFEDGKLFQLVYLFDVGKERLVKRLLPVGTLMEYNLPKPFTVVNQGNYQAISFTHTCPFKEIHLIDVPKKHHASRTESYVALPPLVSESLGFHNNNTLAVYQGLVYYLLWLHSKYDKPYADPVHDPTWRWWQHKTKDKDYFFYLFSNRLAAEGIYINMNAYQKLYNMSGDYGIPDLFFLDKGNWFTITVVLLSHQDTFTSSDSQGPTINVDKKLAIAVTIADPECLSVTVTQDVLLNRNAVINKIKVIDKKRCSEQGMIGRNIKKTSMMLKVLGAPGNCIQRTYLGGIIQGFKVVPIFIGCPPGKRLAFDVSYTIMHSEEINKHYFDCVIKDAEMPCFLFRDLFQPFFLVQDLVTGDSGSFLGSYVLKVVGGGRTLNTIRDYTEEEIFRYNSPLDTTNSLIWKTKVERTTEDKKFYIMSHESPGVEWLCLENSPCYDIIPQSIYPPEFFFKLLVSNRGVDNSTYCDYKLTFIVHIHGLPLSSKRTSFIVMVSTSFFIALVVFYILFCLVWPHIVKAWVSLRWRINNIMASESYYTYASSTAGFSLQSHSFEGPSRAGSKEDNVQAKTA.

Residues 1 to 38 form the signal peptide; it reads MVSRPAMSPVSPVWPRKPNLWAFWVLRLVLLLSLKSWA. Over 39 to 1061 the chain is Extracellular; sequence EDALQHCTWL…IHGLPLSSKR (1023 aa). 2 cysteine pairs are disulfide-bonded: C45-C106 and C160-C166. Residue N103 is glycosylated (N-linked (GlcNAc...) asparagine). N178 is a glycosylation site (N-linked (GlcNAc...) asparagine). Cysteines 289 and 344 form a disulfide. N-linked (GlcNAc...) asparagine glycans are attached at residues N356, N402, N672, and N743. 6 disulfides stabilise this stretch: C395–C403, C634–C856, C802–C830, C878–C1042, C905–C914, and C1006–C1012. Residue N1038 is glycosylated (N-linked (GlcNAc...) asparagine). The chain crosses the membrane as a helical span at residues 1062 to 1083; sequence TSFIVMVSTSFFIALVVFYILF. Residues 1084–1145 are Cytoplasmic-facing; it reads CLVWPHIVKA…KEDNVQAKTA (62 aa).

It belongs to the CATSPERG family. As to quaternary structure, component of the CatSper complex or CatSpermasome composed of the core pore-forming members CATSPER1, CATSPER2, CATSPER3 and CATSPER4 as well as auxiliary members CATSPERB, CATSPERG2, CATSPERD, CATSPERE, CATSPERZ, C2CD6/CATSPERT, SLCO6C1, TMEM249, TMEM262 and EFCAB9. HSPA1 may be an additional auxiliary complex member. The core complex members CATSPER1, CATSPER2, CATSPER3 and CATSPER4 form a heterotetrameric channel. The auxiliary CATSPERB, CATSPERG2, CATSPERD and CATSPERE subunits form a pavilion-like structure over the pore which stabilizes the complex through interactions with CATSPER4, CATSPER3, CATSPER1 and CATSPER2 respectively. SLCO6C1 interacts with CATSPERE and TMEM262/CATSPERH interacts with CATSPERB, further stabilizing the complex. C2CD6/CATSPERT interacts at least with CATSPERD and is required for targeting the CatSper complex in the flagellar membrane. Testis-specific. Specifically expressed in the principal piece of the sperm tail (at protein level). Expressed in spermatocytes and spermatids within the seminiferous tubule but not in interstitial cells.

The protein resides in the cell projection. Its subcellular location is the cilium. It localises to the flagellum membrane. In terms of biological role, auxiliary component of the CatSper complex, a complex involved in sperm cell hyperactivation. Sperm cell hyperactivation is needed for sperm motility which is essential late in the preparation of sperm for fertilization. This is Cation channel sperm-associated auxiliary subunit gamma 2 from Mus musculus (Mouse).